The primary structure comprises 478 residues: Adenosylhomocysteinase (478 aa).

The substrate site is built by Thr67, Asp144, and Glu204. 205 to 207 (TTT) contributes to the NAD(+) binding site. 2 residues coordinate substrate: Lys234 and Asp238. NAD(+)-binding positions include Asn239, 268-273 (GYGDVG), Glu291, Asn326, 347-349 (IGH), and Asn392.

The protein belongs to the adenosylhomocysteinase family. Requires NAD(+) as cofactor.

Its subcellular location is the cytoplasm. It catalyses the reaction S-adenosyl-L-homocysteine + H2O = L-homocysteine + adenosine. It functions in the pathway amino-acid biosynthesis; L-homocysteine biosynthesis; L-homocysteine from S-adenosyl-L-homocysteine: step 1/1. In terms of biological role, may play a key role in the regulation of the intracellular concentration of adenosylhomocysteine. The protein is Adenosylhomocysteinase of Nitrosomonas europaea (strain ATCC 19718 / CIP 103999 / KCTC 2705 / NBRC 14298).